The primary structure comprises 205 residues: Arginine exporter protein ArgO (205 aa).

Helical transmembrane passes span Met1 to Pro21, Leu42 to Leu62, Leu67 to Ala87, Ile111 to Val131, Trp147 to Ala167, and Leu185 to Leu205.

This sequence belongs to the LysE/ArgO transporter (TC 2.A.75) family.

It localises to the cell inner membrane. The catalysed reaction is L-arginine(in) = L-arginine(out). Functionally, involved in the export of arginine. Important to control the intracellular level of arginine and the correct balance between arginine and lysine. In Yersinia pseudotuberculosis serotype O:3 (strain YPIII), this protein is Arginine exporter protein ArgO.